We begin with the raw amino-acid sequence, 392 residues long: Putative RNA-binding protein Luc7-like 2 (392 aa).

Ser-18 is subject to Phosphoserine. Residues 102-177 (EVAKKRLAET…EAEEVYRNSM (76 aa)) adopt a coiled-coil conformation. The span at 235–257 (KQEKRNQERLKRREEREREEREK) shows a compositional bias: basic and acidic residues. Positions 235-392 (KQEKRNQERL…SSEEREAGEI (158 aa)) are disordered. Residues 258-321 (LRRSRSHSKN…RSRSHQRSRH (64 aa)) show a composition bias toward basic residues. Lys-266 and Lys-269 each carry 5-hydroxylysine; by JMJD6. 2 stretches are compositionally biased toward basic and acidic residues: residues 337 to 364 (KERF…DRDR) and 377 to 392 (RSED…AGEI).

The protein belongs to the Luc7 family. Interacts with SCNM1.

It localises to the nucleus speckle. Its subcellular location is the nucleus. It is found in the nucleoplasm. In terms of biological role, may bind to RNA via its Arg/Ser-rich domain. The sequence is that of Putative RNA-binding protein Luc7-like 2 (LUC7L2) from Homo sapiens (Human).